The chain runs to 378 residues: Chaperone protein DnaJ (378 aa).

The J domain occupies 5-70; the sequence is DYYEVLGVAK…QKRAAYDQYG (66 aa). A CR-type zinc finger spans residues 138–216; it reads GYDTQIRVPS…CHGSGKVKET (79 aa). Cys151, Cys154, Cys168, Cys171, Cys190, Cys193, Cys204, and Cys207 together coordinate Zn(2+). CXXCXGXG motif repeat units follow at residues 151-158, 168-175, 190-197, and 204-211; these read CEVCHGSG, CPTCHGQG, CPKCHGTG, and CVHCHGSG.

Belongs to the DnaJ family. As to quaternary structure, homodimer. The cofactor is Zn(2+).

It localises to the cytoplasm. In terms of biological role, participates actively in the response to hyperosmotic and heat shock by preventing the aggregation of stress-denatured proteins and by disaggregating proteins, also in an autonomous, DnaK-independent fashion. Unfolded proteins bind initially to DnaJ; upon interaction with the DnaJ-bound protein, DnaK hydrolyzes its bound ATP, resulting in the formation of a stable complex. GrpE releases ADP from DnaK; ATP binding to DnaK triggers the release of the substrate protein, thus completing the reaction cycle. Several rounds of ATP-dependent interactions between DnaJ, DnaK and GrpE are required for fully efficient folding. Also involved, together with DnaK and GrpE, in the DNA replication of plasmids through activation of initiation proteins. This chain is Chaperone protein DnaJ, found in Burkholderia lata (strain ATCC 17760 / DSM 23089 / LMG 22485 / NCIMB 9086 / R18194 / 383).